The sequence spans 319 residues: Aspartate carbamoyltransferase catalytic subunit (319 aa).

Carbamoyl phosphate-binding residues include arginine 65 and threonine 66. L-aspartate is bound at residue lysine 93. Arginine 115, histidine 143, and glutamine 146 together coordinate carbamoyl phosphate. Arginine 176 and arginine 230 together coordinate L-aspartate. Glycine 271 and proline 272 together coordinate carbamoyl phosphate.

This sequence belongs to the aspartate/ornithine carbamoyltransferase superfamily. ATCase family. In terms of assembly, heterododecamer (2C3:3R2) of six catalytic PyrB chains organized as two trimers (C3), and six regulatory PyrI chains organized as three dimers (R2).

The catalysed reaction is carbamoyl phosphate + L-aspartate = N-carbamoyl-L-aspartate + phosphate + H(+). Its pathway is pyrimidine metabolism; UMP biosynthesis via de novo pathway; (S)-dihydroorotate from bicarbonate: step 2/3. Its function is as follows. Catalyzes the condensation of carbamoyl phosphate and aspartate to form carbamoyl aspartate and inorganic phosphate, the committed step in the de novo pyrimidine nucleotide biosynthesis pathway. The chain is Aspartate carbamoyltransferase catalytic subunit from Chelativorans sp. (strain BNC1).